The following is a 295-amino-acid chain: Acetylglutamate kinase (295 aa).

Residues 61 to 62, Arg83, and Asn187 contribute to the substrate site; that span reads GG.

The protein belongs to the acetylglutamate kinase family. ArgB subfamily.

The protein resides in the cytoplasm. It catalyses the reaction N-acetyl-L-glutamate + ATP = N-acetyl-L-glutamyl 5-phosphate + ADP. It functions in the pathway amino-acid biosynthesis; L-arginine biosynthesis; N(2)-acetyl-L-ornithine from L-glutamate: step 2/4. Catalyzes the ATP-dependent phosphorylation of N-acetyl-L-glutamate. This Methanocorpusculum labreanum (strain ATCC 43576 / DSM 4855 / Z) protein is Acetylglutamate kinase.